The sequence spans 157 residues: Large ribosomal subunit protein uL3 (157 aa).

Residues 57–98 (GKGFAGSIKRHNQSRGPESHGSRYHRRPGSMGPIKGKLKGKK) form a disordered region.

It belongs to the universal ribosomal protein uL3 family. Part of the 50S ribosomal subunit. Forms a cluster with proteins L14 and L19.

Its function is as follows. One of the primary rRNA binding proteins, it binds directly near the 3'-end of the 23S rRNA, where it nucleates assembly of the 50S subunit. This chain is Large ribosomal subunit protein uL3 (rplC), found in Onion yellows phytoplasma (strain OY-M).